Consider the following 151-residue polypeptide: UPF0208 membrane protein ECA3038 (151 aa).

2 helical membrane-spanning segments follow: residues 46 to 66 (FGIR…IALG) and 69 to 89 (LGPA…GLWW).

The protein belongs to the UPF0208 family.

The protein localises to the cell inner membrane. The polypeptide is UPF0208 membrane protein ECA3038 (Pectobacterium atrosepticum (strain SCRI 1043 / ATCC BAA-672) (Erwinia carotovora subsp. atroseptica)).